A 182-amino-acid chain; its full sequence is Tropomyosin-like protein (182 aa).

Positions 1–68 form a coiled coil; the sequence is FDRYNQILDE…ELEQRRTEQQ (68 aa). A compositionally biased stretch (basic and acidic residues) spans 32-66; it reads DEETKKIKQEEAEMKKKIEGEASRKKLELEQRRTE. Disordered regions lie at residues 32–81 and 140–160; these read DEET…GSTD and DQPA…DAGL. A compositionally biased stretch (low complexity) spans 140–153; that stretch reads DQPAQAGPEPAAPA.

The protein resides in the cytoplasm. Its subcellular location is the cytoskeleton. In Pichia angusta (Yeast), this protein is Tropomyosin-like protein.